A 964-amino-acid polypeptide reads, in one-letter code: MSDKTNDDKTLSVNTKKTLTMKRPGVEQSTVRQNFSHGRTKAVVVETKKRKFSRPDEKPEVEAAAPKPAAPAPAAPAPAASTPAPAQAAQPAQAAPVVRAPAPATPAPKPAAPAAPVTKPHVAQQRPAQQRPGGQQAQRPRPSDRSGMVLNTLSRSEMDARRRALEEAQVREVEERARAVEEAKRRAEEDARRAKEREESARRQAEEEARLKAEADARRKAEEEAAKRMPQPEARTERRDDARPAPQGNRPQQAGRPQGNRPPQGGRPQQGGPRPAAPSLADAAPIPGKPLPQSQLRKTVASDDDDRRGGGLTAARRGAPAKPEVRAPKVVKTEDDRRRGKLTISSNLEDEGRSRSLSAMRRRQEKFKRSQMQETREKISREVTIPETITLQELAQRMTERSVDIIKYLMKQGQMMKPGDVIDADMAQLIAEEFGHTVKRVAESDVEEGIFGVADNEAALVSRPPVVTIMGHVDHGKTSLLDAIRHANVVSGEAGGITQHIGAYQVEQNGQKITFIDTPGHAAFTAMRARGAQATDIAILVVAADDSVMPQTIESINHAKAAGVPIIVAINKIDKPAADPQKVRTALLQHDVFVESMGGEVLDVEVSAKNKLNLDKLLEAILLQAEILDLKADPSRTAEGVVVEAQLDRGRGSVATVLVQTGTLHPGDILVAGSEWGRVRALVNDRGEHVKEAGPAMPVEVLGLQGTPQAGDRFAVVANEAKAREIAEYRQRLARDKAVARQSGARGSLEQMMNQLQVSGTKEFPLVIKGDVQGSIEAITNALDKLGTDEVRARIVHSGAGGITESDVSLAEASNAAIIGFNVRANKQARDAADQQGIEIRYYNIIYDLIDDVKAAMSGLLSPERRETFLGNAEILEVFNITKVGKVAGCRVTEGKVERGAGVRLIRDNVVIHEGKLKTLKRFKDEVSEVPAGQECGMAFENYDDIRAGDVIEAFRVEHVSRTL.

A compositionally biased stretch (basic and acidic residues) spans 1–10; that stretch reads MSDKTNDDKT. The tract at residues 1–379 is disordered; sequence MSDKTNDDKT…SQMQETREKI (379 aa). A compositionally biased stretch (polar residues) spans 27–37; the sequence is EQSTVRQNFSH. Positions 77-102 are enriched in low complexity; sequence APAASTPAPAQAAQPAQAAPVVRAPA. Positions 103–113 are enriched in pro residues; that stretch reads PATPAPKPAAP. Positions 114-140 are enriched in low complexity; the sequence is AAPVTKPHVAQQRPAQQRPGGQQAQRP. Composition is skewed to basic and acidic residues over residues 156-227 and 234-243; these read SEMD…EAAK and ARTERRDDAR. Low complexity predominate over residues 250–278; that stretch reads RPQQAGRPQGNRPPQGGRPQQGGPRPAAP. Positions 323-338 are enriched in basic and acidic residues; it reads PEVRAPKVVKTEDDRR. A tr-type G domain is found at 462 to 629; that stretch reads SRPPVVTIMG…AILLQAEILD (168 aa). The tract at residues 471-478 is G1; it reads GHVDHGKT. Position 471-478 (471-478) interacts with GTP; the sequence is GHVDHGKT. A G2 region spans residues 496–500; that stretch reads GITQH. The tract at residues 517–520 is G3; that stretch reads DTPG. GTP contacts are provided by residues 517 to 521 and 571 to 574; these read DTPGH and NKID. Positions 571-574 are G4; that stretch reads NKID. Positions 607–609 are G5; the sequence is SAK.

This sequence belongs to the TRAFAC class translation factor GTPase superfamily. Classic translation factor GTPase family. IF-2 subfamily.

The protein localises to the cytoplasm. One of the essential components for the initiation of protein synthesis. Protects formylmethionyl-tRNA from spontaneous hydrolysis and promotes its binding to the 30S ribosomal subunits. Also involved in the hydrolysis of GTP during the formation of the 70S ribosomal complex. The protein is Translation initiation factor IF-2 of Brucella anthropi (strain ATCC 49188 / DSM 6882 / CCUG 24695 / JCM 21032 / LMG 3331 / NBRC 15819 / NCTC 12168 / Alc 37) (Ochrobactrum anthropi).